The primary structure comprises 147 residues: Ribosome maturation factor RimP (147 aa).

Belongs to the RimP family.

It localises to the cytoplasm. Functionally, required for maturation of 30S ribosomal subunits. This Thermosipho melanesiensis (strain DSM 12029 / CIP 104789 / BI429) protein is Ribosome maturation factor RimP.